A 147-amino-acid chain; its full sequence is Hemoglobin subunit beta (147 aa).

An N-acetylvaline modification is found at valine 2. One can recognise a Globin domain in the interval 3 to 147; the sequence is HLTGEEKSAV…VANALAHKYH (145 aa). Threonine 13 is modified (phosphothreonine). A Phosphoserine modification is found at serine 45. N6-acetyllysine is present on lysine 60. Histidine 64 serves as a coordination point for heme b. An N6-acetyllysine modification is found at lysine 83. Position 93 (histidine 93) interacts with heme b. S-nitrosocysteine is present on cysteine 94. Lysine 145 carries the N6-acetyllysine modification.

Belongs to the globin family. As to quaternary structure, heterotetramer of two alpha chains and two beta chains. Red blood cells.

Its function is as follows. Involved in oxygen transport from the lung to the various peripheral tissues. This Callithrix jacchus (White-tufted-ear marmoset) protein is Hemoglobin subunit beta (HBB).